A 514-amino-acid chain; its full sequence is Bifunctional NAD(P)H-hydrate repair enzyme Nnr (514 aa).

The tract at residues 1–218 (MKLVTSEEIK…IPIEIVNDIV (218 aa)) is NAD(P)H-hydrate epimerase. Positions 9 to 215 (IKRLEERLER…RLGIPIEIVN (207 aa)) constitute a YjeF N-terminal domain. An NADPHX 1; for epimerase activity region spans residues 59 to 63 (NNGGD). Residues asparagine 60 and aspartate 125 each contribute to the K(+) site. Positions 129-135 (GIGLKRE) are NADPHX 1; for epimerase activity. Aspartate 158 lines the (6S)-NADPHX pocket. K(+) is bound at residue serine 161. Residues 226-508 (DWELLKDIVR…KILPLAIDEV (283 aa)) enclose the YjeF C-terminal domain. The tract at residues 226-514 (DWELLKDIVR…IDEVIRRRNV (289 aa)) is ADP-dependent (S)-NAD(P)H-hydrate dehydratase. Glycine 333 contributes to the (6S)-NADPHX binding site. The segment at 382–388 (HYGEMSR) is NADPHX 2; for dehydratase activity. Residues 419–423 (KGPNS) and 439–448 (DFLLATAGSG) contribute to the ADP site. Residue aspartate 449 coordinates (6S)-NADPHX.

In the N-terminal section; belongs to the NnrE/AIBP family. The protein in the C-terminal section; belongs to the NnrD/CARKD family. The cofactor is K(+).

It catalyses the reaction (6S)-NADHX + ADP = AMP + phosphate + NADH + H(+). The catalysed reaction is (6S)-NADPHX + ADP = AMP + phosphate + NADPH + H(+). It carries out the reaction (6R)-NADHX = (6S)-NADHX. The enzyme catalyses (6R)-NADPHX = (6S)-NADPHX. Its function is as follows. Bifunctional enzyme that catalyzes the epimerization of the S- and R-forms of NAD(P)HX and the dehydration of the S-form of NAD(P)HX at the expense of ADP, which is converted to AMP. This allows the repair of both epimers of NAD(P)HX, a damaged form of NAD(P)H that is a result of enzymatic or heat-dependent hydration. This chain is Bifunctional NAD(P)H-hydrate repair enzyme Nnr (nnr), found in Dictyoglomus turgidum (strain DSM 6724 / Z-1310).